The chain runs to 766 residues: MSVYKPGIAPIKAQFLRTAWPARSEALDGSTETGADSEPTAFVPDDEPDGKPEQENPTDAAAPTTSSGANRAQDGEQDKPRKRARGQNKGRTFTRTEDNIALCTQIATGRDACKFGDSCKFTHDLCTYLEQKPRDIETPPHPVSSHECVRFVPADERDVYLATLYEHAVMQDTKRIKKNTDVTADAHPASGSTTPSAPTAPTTHDTVQASVVLGTTCPYFQERGTCPMGWKCRFLGAHVRRLSASCRVLGAEAQGMLGTGLELVEDEAKKHAWLHRSPYMRNEAQPESDQVNWLASDVARRLRSRKYTFDKAPAITSALRKEVDMLSAMTPAEAASTEVGKGPLRVNYEHERLVADPSATLEACEDALRNGGNDDAAADTARVRPCEKRRLQWKGDLYLAPLTTTGNLPFRRLCASFGSDIHCGEMGMAESFLQGHASEWSLVRRWEGERIFGTQVCGAKPELLVPTAEVLAREVGRGLDFVDVNCGCPIDLVYNKGAGSALLDHANKLGRIVRGMSEALGEIPLTIKLRTGTTSKPTTHKIFARAQTEWGVGGLSLHGRSRKQRYKNDADWAYIRTCVDTLHDAVRTWNEEPQHADEPDMVPVPVYGNGDVYGWRDYYDHLEHAHVDGTMIARGALIKPWIFTEIKERRDWDISSRERLDMIRQYASYGLTHWGSDTQGVNTTRRFLCEMLSFTHRYVPLGLLDHIPVRMNDRPPPFHGRDPLESLLSSPSAHDWVRISDMFLGPAPPDWHFTPKHRSNAYEQQG.

Residues 17-93 (RTAWPARSEA…ARGQNKGRTF (77 aa)) are disordered. The segment at 97–126 (EDNIALCTQIATGRDACKFGDSCKFTHDLC) adopts a C3H1-type 1 zinc-finger fold. The disordered stretch occupies residues 183 to 203 (TADAHPASGSTTPSAPTAPTT). Low complexity predominate over residues 188–203 (PASGSTTPSAPTAPTT). Residues 216-241 (TCPYFQERGTCPMGWKCRFLGAHVRR) form a C3H1-type 2 zinc finger. Residues 401–403 (PLT) and Gln455 each bind FMN. The Proton donor role is filled by Cys488. Residues Lys528, His558, 609–611 (NGD), and 633–634 (AR) contribute to the FMN site.

Belongs to the Dus family. Dus3 subfamily. It depends on FMN as a cofactor.

The protein resides in the cytoplasm. It localises to the nucleus. The catalysed reaction is 5,6-dihydrouridine(47) in tRNA + NAD(+) = uridine(47) in tRNA + NADH + H(+). It catalyses the reaction 5,6-dihydrouridine(47) in tRNA + NADP(+) = uridine(47) in tRNA + NADPH + H(+). It carries out the reaction a 5,6-dihydrouridine in mRNA + NAD(+) = a uridine in mRNA + NADH + H(+). The enzyme catalyses a 5,6-dihydrouridine in mRNA + NADP(+) = a uridine in mRNA + NADPH + H(+). In terms of biological role, catalyzes the synthesis of dihydrouridine, a modified base found in the D-loop of most tRNAs. Specifically modifies U47 in cytoplasmic tRNAs. Catalyzes the synthesis of dihydrouridine in some mRNAs, thereby affecting their translation. This Malassezia globosa (strain ATCC MYA-4612 / CBS 7966) (Dandruff-associated fungus) protein is tRNA-dihydrouridine(47) synthase [NAD(P)(+)] (DUS3).